The chain runs to 375 residues: DNA replication and repair protein RecF (375 aa).

Gly30–Thr37 is an ATP binding site.

Belongs to the RecF family.

It localises to the cytoplasm. Functionally, the RecF protein is involved in DNA metabolism; it is required for DNA replication and normal SOS inducibility. RecF binds preferentially to single-stranded, linear DNA. It also seems to bind ATP. The protein is DNA replication and repair protein RecF of Lactobacillus acidophilus (strain ATCC 700396 / NCK56 / N2 / NCFM).